Consider the following 383-residue polypeptide: Homoserine O-acetyltransferase (383 aa).

The AB hydrolase-1 domain occupies 52-362; that stretch reads NAILVCHALT…PWGHDAFLLD (311 aa). Ser158 functions as the Nucleophile in the catalytic mechanism. Arg227 provides a ligand contact to substrate. Residues Asp323 and His356 contribute to the active site. Asp357 contacts substrate.

This sequence belongs to the AB hydrolase superfamily. MetX family. As to quaternary structure, homodimer.

It localises to the cytoplasm. The enzyme catalyses L-homoserine + acetyl-CoA = O-acetyl-L-homoserine + CoA. It functions in the pathway amino-acid biosynthesis; L-methionine biosynthesis via de novo pathway; O-acetyl-L-homoserine from L-homoserine: step 1/1. Its function is as follows. Transfers an acetyl group from acetyl-CoA to L-homoserine, forming acetyl-L-homoserine. The chain is Homoserine O-acetyltransferase from Symbiobacterium thermophilum (strain DSM 24528 / JCM 14929 / IAM 14863 / T).